The primary structure comprises 149 residues: MVSHLKKTRKLRGHVSHGHGRVGKHRKGGCRGGRGKAGGMHHHRILMEKWHPGYYGKLGMRTFHLKKNPLHCPVVNIDKLWSLVSDATRQKYAEDKKKVPVIDVTKAGFFKVLGKGRLPNQPVVVKAKYFSKTAERRIVAVGGACVLTA.

The span at 1-29 shows a compositional bias: basic residues; it reads MVSHLKKTRKLRGHVSHGHGRVGKHRKGG. Residues 1-38 form a disordered region; it reads MVSHLKKTRKLRGHVSHGHGRVGKHRKGGCRGGRGKAG.

Belongs to the universal ribosomal protein uL15 family.

This Tetrahymena thermophila protein is Large ribosomal subunit protein uL15 (RPL27A).